A 251-amino-acid polypeptide reads, in one-letter code: Imidazole glycerol phosphate synthase subunit HisF (251 aa).

Active-site residues include Asp-11 and Asp-130.

This sequence belongs to the HisA/HisF family. In terms of assembly, heterodimer of HisH and HisF.

Its subcellular location is the cytoplasm. The catalysed reaction is 5-[(5-phospho-1-deoxy-D-ribulos-1-ylimino)methylamino]-1-(5-phospho-beta-D-ribosyl)imidazole-4-carboxamide + L-glutamine = D-erythro-1-(imidazol-4-yl)glycerol 3-phosphate + 5-amino-1-(5-phospho-beta-D-ribosyl)imidazole-4-carboxamide + L-glutamate + H(+). The protein operates within amino-acid biosynthesis; L-histidine biosynthesis; L-histidine from 5-phospho-alpha-D-ribose 1-diphosphate: step 5/9. Its function is as follows. IGPS catalyzes the conversion of PRFAR and glutamine to IGP, AICAR and glutamate. The HisF subunit catalyzes the cyclization activity that produces IGP and AICAR from PRFAR using the ammonia provided by the HisH subunit. This is Imidazole glycerol phosphate synthase subunit HisF from Bacteroides thetaiotaomicron (strain ATCC 29148 / DSM 2079 / JCM 5827 / CCUG 10774 / NCTC 10582 / VPI-5482 / E50).